The following is a 393-amino-acid chain: Formate-dependent phosphoribosylglycinamide formyltransferase (393 aa).

N(1)-(5-phospho-beta-D-ribosyl)glycinamide-binding positions include 22–23 and Glu-82; that span reads EL. ATP-binding positions include Arg-114, Lys-155, 160–165, 195–198, and Glu-203; these read SSGHGQ and EGFV. Residues 119–308 form the ATP-grasp domain; that stretch reads RLAAEELGLP…EFALHARAIL (190 aa). Mg(2+) contacts are provided by Glu-267 and Glu-279. N(1)-(5-phospho-beta-D-ribosyl)glycinamide contacts are provided by residues Asp-286, Lys-356, and 363-364; that span reads RR.

It belongs to the PurK/PurT family. Homodimer.

The catalysed reaction is N(1)-(5-phospho-beta-D-ribosyl)glycinamide + formate + ATP = N(2)-formyl-N(1)-(5-phospho-beta-D-ribosyl)glycinamide + ADP + phosphate + H(+). It participates in purine metabolism; IMP biosynthesis via de novo pathway; N(2)-formyl-N(1)-(5-phospho-D-ribosyl)glycinamide from N(1)-(5-phospho-D-ribosyl)glycinamide (formate route): step 1/1. Its function is as follows. Involved in the de novo purine biosynthesis. Catalyzes the transfer of formate to 5-phospho-ribosyl-glycinamide (GAR), producing 5-phospho-ribosyl-N-formylglycinamide (FGAR). Formate is provided by PurU via hydrolysis of 10-formyl-tetrahydrofolate. The protein is Formate-dependent phosphoribosylglycinamide formyltransferase of Mannheimia succiniciproducens (strain KCTC 0769BP / MBEL55E).